The chain runs to 527 residues: Probable feruloyl esterase B-2 (527 aa).

A signal peptide spans 1–19; it reads MAPIHYLLPIITLGSAALA. Intrachain disulfides connect C28–C75 and C63–C114. N53, N85, N98, N138, and N180 each carry an N-linked (GlcNAc...) asparagine glycan. Disulfide bonds link C187-C441, C256-C273, C282-C291, and C503-C525. The active-site Acyl-ester intermediate is S188. 5 residues coordinate Ca(2+): D257, D260, A262, D264, and I266. 2 N-linked (GlcNAc...) asparagine glycosylation sites follow: N311 and N355. Catalysis depends on charge relay system residues D400 and H440. N516 carries an N-linked (GlcNAc...) asparagine glycan.

Belongs to the tannase family.

The protein localises to the secreted. The enzyme catalyses feruloyl-polysaccharide + H2O = ferulate + polysaccharide.. Functionally, involved in degradation of plant cell walls. Hydrolyzes the feruloyl-arabinose ester bond in arabinoxylans as well as the feruloyl-galactose and feruloyl-arabinose ester bonds in pectin. The chain is Probable feruloyl esterase B-2 (faeB-2) from Aspergillus terreus (strain NIH 2624 / FGSC A1156).